Here is a 346-residue protein sequence, read N- to C-terminus: Selenide, water dikinase (346 aa).

The active site involves U16. Residue U16 is a non-standard amino acid, selenocysteine. Residues K19 and 47–49 (TAD) contribute to the ATP site. A Mg(2+)-binding site is contributed by D50. ATP-binding positions include D67, D90, and 138-140 (GHS). A Mg(2+)-binding site is contributed by D90. Residue D226 coordinates Mg(2+).

It belongs to the selenophosphate synthase 1 family. Class I subfamily. Homodimer. Mg(2+) serves as cofactor.

The enzyme catalyses hydrogenselenide + ATP + H2O = selenophosphate + AMP + phosphate + 2 H(+). Functionally, synthesizes selenophosphate from selenide and ATP. The polypeptide is Selenide, water dikinase (Haemophilus influenzae (strain ATCC 51907 / DSM 11121 / KW20 / Rd)).